We begin with the raw amino-acid sequence, 72 residues long: Large ribosomal subunit protein bL32 (72 aa).

Belongs to the bacterial ribosomal protein bL32 family.

The sequence is that of Large ribosomal subunit protein bL32 from Dehalococcoides mccartyi (strain ATCC BAA-2266 / KCTC 15142 / 195) (Dehalococcoides ethenogenes (strain 195)).